A 368-amino-acid polypeptide reads, in one-letter code: Probable protein phosphatase 2C 58 (368 aa).

The region spanning 23-329 is the PPM-type phosphatase domain; sequence KFGLSSMQGW…DNMTMILVQF (307 aa). 4 residues coordinate Mn(2+): D57, G58, D272, and D320. The interval 336–368 is disordered; that stretch reads NKNVSPAEQSAADKQPTGDTHWSEIHVTEESSS. Residues 356–368 are compositionally biased toward basic and acidic residues; sequence HWSEIHVTEESSS.

The protein belongs to the PP2C family. It depends on Mg(2+) as a cofactor. Mn(2+) is required as a cofactor.

The enzyme catalyses O-phospho-L-seryl-[protein] + H2O = L-seryl-[protein] + phosphate. It carries out the reaction O-phospho-L-threonyl-[protein] + H2O = L-threonyl-[protein] + phosphate. This is Probable protein phosphatase 2C 58 from Oryza sativa subsp. japonica (Rice).